We begin with the raw amino-acid sequence, 390 residues long: MPEGPELHLASQFVNEACRALVFGGCVEKSSVSRNPEVPFESSAYRISASARGKELRLILSPLPGAQPQQEPLALVFRFGMSGSFQLVPREELPRHAHLRFYTAPPGPRLALCFVDIRRFGRWDLGGKWQPGRGPCVLQEYQQFRENVLRNLADKAFDRPICEALLDQRFFNGIGNYLRAEILYRLKIPPFEKARSVLEALQQHRPSPELTLSQKIRTKLQNPDLLELCHSVPKEVVQLGGKGYGSESGEEDFAAFRAWLRCYGMPGMSSLQDRHGRTIWFQGDPGPLAPKGRKSRKKKSKATQLSPEDRVEDALPPSKAPSRTRRAKRDLPKRTATQRPEGTSLQQDPEAPTVPKKGRRKGRQAASGHCRPRKVKADIPSLEPEGTSAS.

Pro2 (schiff-base intermediate with DNA) is an active-site residue. Glu3 functions as the Proton donor in the catalytic mechanism. Lys54 functions as the Proton donor; for beta-elimination activity in the catalytic mechanism. Asn176 contacts DNA. Residues 278–390 form a disordered region; that stretch reads TIWFQGDPGP…SLEPEGTSAS (113 aa). Positions 291 to 301 are enriched in basic residues; that stretch reads KGRKSRKKKSK. The span at 335-347 shows a compositional bias: polar residues; that stretch reads TATQRPEGTSLQQ. Arg339 lines the DNA pocket. The active-site Proton donor; for delta-elimination activity is Arg339.

The protein belongs to the FPG family. In terms of tissue distribution, ubiquitous.

The protein resides in the cytoplasm. It is found in the cytoskeleton. The protein localises to the microtubule organizing center. It localises to the centrosome. Its subcellular location is the nucleus. The protein resides in the chromosome. The catalysed reaction is 2'-deoxyribonucleotide-(2'-deoxyribose 5'-phosphate)-2'-deoxyribonucleotide-DNA = a 3'-end 2'-deoxyribonucleotide-(2,3-dehydro-2,3-deoxyribose 5'-phosphate)-DNA + a 5'-end 5'-phospho-2'-deoxyribonucleoside-DNA + H(+). Involved in base excision repair of DNA damaged by oxidation or by mutagenic agents. Acts as a DNA glycosylase that recognizes and removes damaged bases. Has a preference for oxidized pyrimidines, such as thymine glycol, formamidopyrimidine (Fapy) and 5-hydroxyuracil. Has marginal activity towards 8-oxoguanine. Has AP (apurinic/apyrimidinic) lyase activity and introduces nicks in the DNA strand. Cleaves the DNA backbone by beta-delta elimination to generate a single-strand break at the site of the removed base with both 3'- and 5'-phosphates. Has DNA glycosylase/lyase activity towards mismatched uracil and thymine, in particular in U:C and T:C mismatches. Specifically binds 5-hydroxymethylcytosine (5hmC), suggesting that it acts as a specific reader of 5hmC. In Homo sapiens (Human), this protein is Endonuclease 8-like 1 (NEIL1).